Reading from the N-terminus, the 200-residue chain is Pyrrolidone-carboxylate peptidase (200 aa).

Residues Glu-78, Cys-141, and His-165 contribute to the active site.

This sequence belongs to the peptidase C15 family. In terms of assembly, homotetramer.

It is found in the cytoplasm. The catalysed reaction is Release of an N-terminal pyroglutamyl group from a polypeptide, the second amino acid generally not being Pro.. In terms of biological role, removes 5-oxoproline from various penultimate amino acid residues except L-proline. The polypeptide is Pyrrolidone-carboxylate peptidase (Lactobacillus acidophilus (strain ATCC 700396 / NCK56 / N2 / NCFM)).